The chain runs to 325 residues: Large ribosomal subunit protein uL1m (325 aa).

The transit peptide at 1-50 directs the protein to the mitochondrion; the sequence is MAATVRCFGRVLIHHQRCSLATVTSQTSLYPCCIYVPVPNRHFAAAAKPA. The segment at 47–66 is disordered; the sequence is AKPAKKTKKGTKEKASNEKK. A compositionally biased stretch (basic and acidic residues) spans 56–66; it reads GTKEKASNEKK.

The protein belongs to the universal ribosomal protein uL1 family.

It is found in the mitochondrion. The chain is Large ribosomal subunit protein uL1m (MRPL1) from Bos taurus (Bovine).